Here is a 163-residue protein sequence, read N- to C-terminus: Phosphopantetheine adenylyltransferase (163 aa).

T10 contacts substrate. ATP-binding positions include 10-11 (TF) and H18. Residues K42, L75, and R89 each coordinate substrate. ATP contacts are provided by residues 90–92 (GVR), E100, and 125–131 (YTYVASS).

This sequence belongs to the bacterial CoaD family. As to quaternary structure, homohexamer. The cofactor is Mg(2+).

The protein localises to the cytoplasm. The enzyme catalyses (R)-4'-phosphopantetheine + ATP + H(+) = 3'-dephospho-CoA + diphosphate. Its pathway is cofactor biosynthesis; coenzyme A biosynthesis; CoA from (R)-pantothenate: step 4/5. In terms of biological role, reversibly transfers an adenylyl group from ATP to 4'-phosphopantetheine, yielding dephospho-CoA (dPCoA) and pyrophosphate. This chain is Phosphopantetheine adenylyltransferase, found in Pelodictyon phaeoclathratiforme (strain DSM 5477 / BU-1).